Reading from the N-terminus, the 252-residue chain is 14-3-3 protein 10 (252 aa).

This sequence belongs to the 14-3-3 family. Homodimer.

This chain is 14-3-3 protein 10 (TFT10), found in Solanum lycopersicum (Tomato).